A 757-amino-acid polypeptide reads, in one-letter code: Polyribonucleotide nucleotidyltransferase (757 aa).

2 residues coordinate Mg(2+): D531 and D537. Positions 597 to 656 (PRVTTIRVPVDKIGEVIGPKGKIINAITEETGAQISIEDDGTVFVGATDGPSAQAAIDRI) constitute a KH domain. The S1 motif domain occupies 668-737 (GERFLGTVVK…KRGKISLVLV (70 aa)).

The protein belongs to the polyribonucleotide nucleotidyltransferase family. It depends on Mg(2+) as a cofactor.

The protein localises to the cytoplasm. It catalyses the reaction RNA(n+1) + phosphate = RNA(n) + a ribonucleoside 5'-diphosphate. Functionally, involved in mRNA degradation. Catalyzes the phosphorolysis of single-stranded polyribonucleotides processively in the 3'- to 5'-direction. This chain is Polyribonucleotide nucleotidyltransferase, found in Mycolicibacterium paratuberculosis (strain ATCC BAA-968 / K-10) (Mycobacterium paratuberculosis).